A 190-amino-acid polypeptide reads, in one-letter code: Secreted isochorismatase effector Isc1 (190 aa).

Catalysis depends on residues Asp26, Lys100, and Cys133.

It belongs to the isochorismatase family.

It is found in the secreted. It localises to the host cytoplasm. The protein resides in the host nucleus. The enzyme catalyses isochorismate + H2O = (2S,3S)-2,3-dihydroxy-2,3-dihydrobenzoate + pyruvate. Its function is as follows. Secreted isochorismatase required for full virulence of V.dahliae. Suppresses salicylate-mediated innate immunity of the host by disrupting the plant salicylate metabolism pathway via hydrolysis of its isochorismate precursor. The sequence is that of Secreted isochorismatase effector Isc1 from Verticillium dahliae (strain VdLs.17 / ATCC MYA-4575 / FGSC 10137) (Verticillium wilt).